The following is a 116-amino-acid chain: CDKN2AIP N-terminal-like protein (116 aa).

At Met-1 the chain carries N-acetylmethionine. The region spanning 24–116 (AEQFRSYSES…RSELMKKHQS (93 aa)) is the XRN2-binding (XTBD) domain.

This sequence belongs to the CARF family. Interacts with XRN2; the interaction is direct.

In Bos taurus (Bovine), this protein is CDKN2AIP N-terminal-like protein (CDKN2AIPNL).